The chain runs to 153 residues: Large ribosomal subunit protein uL15 (153 aa).

Positions 21–41 are disordered; that stretch reads RGIGSGKGKTGGRGIKGQKSR. Positions 23–35 are enriched in gly residues; that stretch reads IGSGKGKTGGRGI.

The protein belongs to the universal ribosomal protein uL15 family. Part of the 50S ribosomal subunit.

Binds to the 23S rRNA. In Rickettsia felis (strain ATCC VR-1525 / URRWXCal2) (Rickettsia azadi), this protein is Large ribosomal subunit protein uL15.